The following is a 368-amino-acid chain: Homoserine dehydrogenase (368 aa).

Positions 12, 14, and 15 each coordinate NAD(+). Residue valine 15 coordinates NADP(+). NADPH contacts are provided by valine 15, lysine 59, threonine 95, serine 96, and lysine 119. NAD(+) is bound at residue threonine 95. Residue threonine 95 coordinates NADP(+). Lysine 119 provides a ligand contact to NADP(+). 4 residues coordinate Na(+): glutamate 146, valine 149, alanine 151, and leucine 153. Positions 209 and 212 each coordinate NADP(+). L-homoserine-binding residues include glutamate 212 and aspartate 223. Residue lysine 227 is the Proton donor of the active site. Residue glycine 349 participates in NAD(+) binding. Glycine 349 contributes to the NADP(+) binding site. Glycine 349 is a binding site for NADPH.

Belongs to the homoserine dehydrogenase family. The cofactor is a metal cation.

It carries out the reaction L-homoserine + NADP(+) = L-aspartate 4-semialdehyde + NADPH + H(+). It catalyses the reaction L-homoserine + NAD(+) = L-aspartate 4-semialdehyde + NADH + H(+). It participates in amino-acid biosynthesis; L-methionine biosynthesis via de novo pathway; L-homoserine from L-aspartate: step 3/3. Its pathway is amino-acid biosynthesis; L-threonine biosynthesis; L-threonine from L-aspartate: step 3/5. In terms of biological role, catalyzes the conversion of L-aspartate-beta-semialdehyde (L-Asa) to L-homoserine (L-Hse), the third step in the biosynthesis of amino acids that derive from aspartate (the aspartate family of amino acids), including methioinine and threonine, the latter of which is a precursor to isoleucine; production of homoserine leads to a branch-point in the pathway as it can either be O-phosphorylated for processing to threonine, or O-acylated for processing to methionine. This chain is Homoserine dehydrogenase, found in Emericella nidulans (strain FGSC A4 / ATCC 38163 / CBS 112.46 / NRRL 194 / M139) (Aspergillus nidulans).